A 502-amino-acid polypeptide reads, in one-letter code: ATP synthase subunit alpha (502 aa).

Gly169 to Thr176 lines the ATP pocket.

This sequence belongs to the ATPase alpha/beta chains family. F-type ATPases have 2 components, CF(1) - the catalytic core - and CF(0) - the membrane proton channel. CF(1) has five subunits: alpha(3), beta(3), gamma(1), delta(1), epsilon(1). CF(0) has three main subunits: a(1), b(2) and c(9-12). The alpha and beta chains form an alternating ring which encloses part of the gamma chain. CF(1) is attached to CF(0) by a central stalk formed by the gamma and epsilon chains, while a peripheral stalk is formed by the delta and b chains.

It localises to the cell membrane. It carries out the reaction ATP + H2O + 4 H(+)(in) = ADP + phosphate + 5 H(+)(out). In terms of biological role, produces ATP from ADP in the presence of a proton gradient across the membrane. The alpha chain is a regulatory subunit. The polypeptide is ATP synthase subunit alpha (Lysinibacillus sphaericus (strain C3-41)).